A 319-amino-acid chain; its full sequence is Insulin gene enhancer protein ISL-2 (319 aa).

2 consecutive LIM zinc-binding domains span residues 1–43 (FLLR…CKRD) and 52–106 (CAQC…RADH). 3 disordered regions span residues 106 to 151 (HGPP…EKTT), 218 to 237 (QQHS…LVAG), and 286 to 319 (ESGS…PAET). Positions 150–209 (TTRVRTVLNEKQLHTLRTCYAANPRPDALMKEQLVEMTGLSPRVIRVWFQNKRCKDKKKS) form a DNA-binding region, homeobox. A compositionally biased stretch (polar residues) spans 218–230 (QQHSDKTSLQGLT). Positions 286-303 (ESGSLGTSSGSDVTSLSS) are enriched in low complexity. Residues 304–319 (QLPDTPNSMVPSPAET) are compositionally biased toward polar residues.

The protein resides in the nucleus. In terms of biological role, transcriptional factor that defines subclasses of motoneurons that segregate into columns in the spinal cord and select distinct axon pathways. Acts in conjunction with LIM-1, LIM-3 and ISL-1. This is Insulin gene enhancer protein ISL-2 (ISL2) from Gallus gallus (Chicken).